The primary structure comprises 69 residues: Cell division protein CrgA (69 aa).

2 helical membrane-spanning segments follow: residues 14–34 (VWFP…MVLF) and 45–65 (AVGT…FAMM).

It belongs to the CrgA family.

The protein localises to the cell membrane. Involved in cell division. This Tropheryma whipplei (strain TW08/27) (Whipple's bacillus) protein is Cell division protein CrgA.